The chain runs to 241 residues: Pyridoxal phosphate phosphatase PHOSPHO2 (241 aa).

The active-site Nucleophile is the aspartate 8. Residues aspartate 8 and aspartate 10 each contribute to the Mg(2+) site. Aspartate 10 (proton donor) is an active-site residue. Residues aspartate 19 and aspartate 99 each coordinate substrate. Residue aspartate 179 coordinates Mg(2+).

The protein belongs to the HAD-like hydrolase superfamily. PHOSPHO family. The cofactor is Mg(2+).

It catalyses the reaction pyridoxal 5'-phosphate + H2O = pyridoxal + phosphate. Its function is as follows. Phosphatase that has high activity toward pyridoxal 5'-phosphate (PLP). Also active at much lower level toward pyrophosphate, phosphoethanolamine (PEA), phosphocholine (PCho), phospho-l-tyrosine, fructose-6-phosphate, p-nitrophenyl phosphate, and h-glycerophosphate. This Bos taurus (Bovine) protein is Pyridoxal phosphate phosphatase PHOSPHO2 (PHOSPHO2).